Reading from the N-terminus, the 211-residue chain is uncharacterized protein (211 aa).

This is an uncharacterized protein from Mycoplasma pneumoniae (strain ATCC 29342 / M129 / Subtype 1) (Mycoplasmoides pneumoniae).